Reading from the N-terminus, the 1535-residue chain is CLIP-associating protein 1 (1535 aa).

HEAT repeat units lie at residues 87 to 124 (AQIG…QAAN) and 163 to 200 (LTLS…HVGE). A disordered region spans residues 237-290 (NEKNFDDEDSVDGNRPSSASSSSSKAPSSSRRNVNLGTTRRLMSSSLGSKSSAA). S246 bears the Phosphoserine mark. The span at 252 to 266 (PSSASSSSSKAPSSS) shows a compositional bias: low complexity. A compositionally biased stretch (polar residues) spans 267-279 (RRNVNLGTTRRLM). A compositionally biased stretch (low complexity) spans 280-290 (SSSLGSKSSAA). 2 HEAT repeats span residues 405–440 (HGAE…IRHT) and 441–477 (HIPR…EWQT). 2 disordered regions span residues 543 to 600 (SDSI…RSRS) and 612 to 782 (SKVS…GRIP). Phosphoserine occurs at positions 545, 548, 558, 559, and 568. Low complexity predominate over residues 548-567 (SLPQSDRSSSSSQESLNRPL). Positions 579 to 594 (SRGSTVSTKSVSTTGS) are enriched in low complexity. S600 carries the post-translational modification Phosphoserine. The segment covering 612–633 (SKVSSSSGSPAFSSAAALPPGS) has biased composition (low complexity). 4 positions are modified to phosphoserine: S636, S646, S647, and S649. The segment covering 645–658 (QSSGSTTNVASTPD) has biased composition (polar residues). Residue T656 is modified to Phosphothreonine. An interaction with microtubules, MAPRE1 and MAPRE3 region spans residues 662 to 782 (RSRAKVVSQS…FGLGQSGRIP (121 aa)). The segment covering 673–695 (RSRSANPAGAGSRSSSPGKLLGS) has biased composition (low complexity). S684, S688, S695, and S702 each carry phosphoserine. T708 is subject to Phosphothreonine. Phosphoserine is present on S711. Polar residues predominate over residues 721–730 (QGCSRETSPN). Phosphoserine is present on residues S784, S794, and S820. The HEAT 5 repeat unit spans residues 971–1008 (QQFNILMRFIVDQTQTPNLKVKVAILKYIESLARQMDP). Residues 1078–1157 (LKNSSNTGVG…APSHKTLRRS (80 aa)) form a disordered region. Residues 1079–1094 (KNSSNTGVGSPSNTIG) are compositionally biased toward polar residues. A Phosphoserine modification is found at S1088. 2 positions are modified to phosphothreonine: T1092 and T1096. A compositionally biased stretch (low complexity) spans 1103–1112 (SRTSPLTSPT). A phosphoserine mark is found at S1110, F1139, and S1193. Residues 1200–1213 (PIKRDGKKDCDIVS) show a composition bias toward basic and acidic residues. Disordered stretches follow at residues 1200–1233 (PIKR…EIEG) and 1245–1266 (LNTQ…PYPY). S1220 is modified (phosphoserine). The tract at residues 1251-1535 (RAFPGPRARE…SSSSDVSTHS (285 aa)) is interaction with CLIP2 and RSN. The interaction with PHLDB2 stretch occupies residues 1251–1535 (RAFPGPRARE…SSSSDVSTHS (285 aa)). The localization to kinetochores stretch occupies residues 1253-1535 (FPGPRAREYN…SSSSDVSTHS (283 aa)). A coiled-coil region spans residues 1296 to 1327 (DHSDLVADLLKELSNHNERVEERKGALLELLK). HEAT repeat units follow at residues 1339-1376 (EHFK…NQPA) and 1457-1494 (QLLV…VIGE).

This sequence belongs to the CLASP family. Interacts with ERC1, MAPRE1, MAPRE3, microtubules, and PHLDB2. The interaction with ERC1 may be mediated by PHLDB2. Interacts with GCC2; recruits CLASP1 to Golgi membranes. Interacts with CLIP2 and RSN. Interacts with MACF1. Interacts with mtcl2 and MTCL1. In terms of tissue distribution, highly expressed in brain and heart and at lower levels in kidney, lung, skeletal muscle and testis.

The protein resides in the cytoplasm. It is found in the cytoskeleton. The protein localises to the microtubule organizing center. Its subcellular location is the centrosome. It localises to the chromosome. The protein resides in the centromere. It is found in the kinetochore. The protein localises to the spindle. Its subcellular location is the golgi apparatus. It localises to the trans-Golgi network. Its function is as follows. Microtubule plus-end tracking protein that promotes the stabilization of dynamic microtubules. Involved in the nucleation of noncentrosomal microtubules originating from the trans-Golgi network (TGN). Required for the polarization of the cytoplasmic microtubule arrays in migrating cells towards the leading edge of the cell. May act at the cell cortex to enhance the frequency of rescue of depolymerizing microtubules by attaching their plus-ends to cortical platforms composed of ERC1 and PHLDB2. This cortical microtubule stabilizing activity is regulated at least in part by phosphatidylinositol 3-kinase signaling. Also performs a similar stabilizing function at the kinetochore which is essential for the bipolar alignment of chromosomes on the mitotic spindle. The chain is CLIP-associating protein 1 (Clasp1) from Mus musculus (Mouse).